The chain runs to 121 residues: Large ribosomal subunit protein bL12 (121 aa).

It belongs to the bacterial ribosomal protein bL12 family. In terms of assembly, homodimer. Part of the ribosomal stalk of the 50S ribosomal subunit. Forms a multimeric L10(L12)X complex, where L10 forms an elongated spine to which 2 to 4 L12 dimers bind in a sequential fashion. Binds GTP-bound translation factors.

Functionally, forms part of the ribosomal stalk which helps the ribosome interact with GTP-bound translation factors. Is thus essential for accurate translation. The chain is Large ribosomal subunit protein bL12 from Malacoplasma penetrans (strain HF-2) (Mycoplasma penetrans).